The sequence spans 211 residues: uncharacterized protein (211 aa).

Helical transmembrane passes span 77–97 (FLMFHLFCNSALFAVGIAITI), 113–133 (GISVSVWLILAAYMIYWVLIG), 152–172 (ILISMVPNVIFMLVFLFNVIP), and 179–199 (LLTPWFVGTCAFATLLFPLFG).

Its subcellular location is the cell membrane. This is an uncharacterized protein from Bacillus subtilis (strain 168).